A 521-amino-acid chain; its full sequence is Maturase K (521 aa).

The protein belongs to the intron maturase 2 family. MatK subfamily.

The protein resides in the plastid. Usually encoded in the trnK tRNA gene intron. Probably assists in splicing its own and other chloroplast group II introns. The polypeptide is Maturase K (Cuscuta exaltata (Tall dodder)).